The following is a 711-amino-acid chain: K(+)-insensitive pyrophosphate-energized proton pump (711 aa).

5 helical membrane-spanning segments follow: residues 7–27, 58–78, 85–105, 145–165, and 179–199; these read LIYG…KFIF, IASL…YGHL, ALSF…CSAL, LAVT…YGGL, and IVGF…GGGI. A substrate-binding site is contributed by K202. Mg(2+) is bound by residues D205, D209, and D235. The next 6 helical transmembrane spans lie at 251 to 271, 274 to 294, 311 to 331, 343 to 363, 403 to 423, and 431 to 451; these read TAAE…IFGW, ILFP…GIFF, GYFV…KVML, YLLL…FVFL, LPVI…EMAI, and LYGT…ILAM. D459 contributes to the Mg(2+) binding site. The next 4 helical transmembrane spans lie at 495-515, 535-555, 602-622, and 624-644; these read YAIG…LDEV, EVFI…STAI, EMVI…VILG, and EAAA…ALYL. Ca(2+)-binding residues include D652, D678, and D682. Position 685 (K685) interacts with substrate. The chain crosses the membrane as a helical span at residues 690 to 710; it reads PSLHVLIKLISTITLVFVALF.

This sequence belongs to the H(+)-translocating pyrophosphatase (TC 3.A.10) family. K(+)-insensitive subfamily. Homodimer. It depends on Mg(2+) as a cofactor.

The protein localises to the cell membrane. It carries out the reaction diphosphate + H2O + H(+)(in) = 2 phosphate + 2 H(+)(out). Proton pump that utilizes the energy of pyrophosphate hydrolysis as the driving force for proton movement across the membrane. Generates a proton motive force. The polypeptide is K(+)-insensitive pyrophosphate-energized proton pump (Caldanaerobacter subterraneus subsp. tengcongensis (strain DSM 15242 / JCM 11007 / NBRC 100824 / MB4) (Thermoanaerobacter tengcongensis)).